Reading from the N-terminus, the 532-residue chain is Flavin-containing monooxygenase 3 (532 aa).

Residues 9–13, Glu32, 40–41, and 61–62 contribute to the FAD site; these read GAGVS, LW, and NS. NADP(+) contacts are provided by residues 60 to 61 and 195 to 198; these read SN and SGCD. The residue at position 401 (Ser401) is a Phosphoserine. A helical transmembrane segment spans residues 510 to 530; sequence FFFHWLKLFAIPILLIAVFLV.

Belongs to the FMO family. FAD is required as a cofactor.

Its subcellular location is the microsome membrane. The protein localises to the endoplasmic reticulum membrane. It carries out the reaction trimethylamine + NADPH + O2 = trimethylamine N-oxide + NADP(+) + H2O. The catalysed reaction is N,N-dimethylaniline + NADPH + O2 + H(+) = N,N-dimethylaniline N-oxide + NADP(+) + H2O. It catalyses the reaction hypotaurine + NADPH + O2 + H(+) = taurine + NADP(+) + H2O. The enzyme catalyses (S)-nicotine + NADPH + O2 = trans-(S)-nicotine N(1')-oxide + NADP(+) + H2O. It carries out the reaction albendazole + NADPH + O2 + H(+) = albendazole S-oxide + NADP(+) + H2O. Its function is as follows. Essential hepatic enzyme that catalyzes the oxygenation of a wide variety of nitrogen- and sulfur-containing compounds including drugs as well as dietary compounds. Plays an important role in the metabolism of trimethylamine (TMA), via the production of trimethylamine N-oxide (TMAO) metabolite. TMA is generated by the action of gut microbiota using dietary precursors such as choline, choline containing compounds, betaine or L-carnitine. By regulating TMAO concentration, FMO3 directly impacts both platelet responsiveness and rate of thrombus formation. This is Flavin-containing monooxygenase 3 (FMO3) from Pan troglodytes (Chimpanzee).